The chain runs to 589 residues: L-fucose isomerase (589 aa).

Catalysis depends on proton acceptor residues Glu340 and Asp364. Residues Glu340, Asp364, and His527 each coordinate Mn(2+).

The protein belongs to the L-fucose isomerase family. The cofactor is Mn(2+).

Its subcellular location is the cytoplasm. It carries out the reaction L-fucose = L-fuculose. It participates in carbohydrate degradation; L-fucose degradation; L-lactaldehyde and glycerone phosphate from L-fucose: step 1/3. Its function is as follows. Converts the aldose L-fucose into the corresponding ketose L-fuculose. This is L-fucose isomerase from Haemophilus influenzae (strain ATCC 51907 / DSM 11121 / KW20 / Rd).